A 299-amino-acid polypeptide reads, in one-letter code: Putative ammonium transporter 4 member 1 (299 aa).

Transmembrane regions (helical) follow at residues 16–36 (AWPL…LVIL), 59–79 (VLLT…GFNG), 104–124 (LLVW…ISAV), 158–178 (VLHT…LLLL), and 218–238 (AGIA…CLAV).

Belongs to the ammonia transporter channel (TC 1.A.11.2) family.

It is found in the membrane. This chain is Putative ammonium transporter 4 member 1 (AMT4-1), found in Oryza sativa subsp. japonica (Rice).